The following is a 588-amino-acid chain: Proline--tRNA ligase (588 aa).

It belongs to the class-II aminoacyl-tRNA synthetase family. ProS type 1 subfamily. In terms of assembly, homodimer.

Its subcellular location is the cytoplasm. The catalysed reaction is tRNA(Pro) + L-proline + ATP = L-prolyl-tRNA(Pro) + AMP + diphosphate. Functionally, catalyzes the attachment of proline to tRNA(Pro) in a two-step reaction: proline is first activated by ATP to form Pro-AMP and then transferred to the acceptor end of tRNA(Pro). As ProRS can inadvertently accommodate and process non-cognate amino acids such as alanine and cysteine, to avoid such errors it has two additional distinct editing activities against alanine. One activity is designated as 'pretransfer' editing and involves the tRNA(Pro)-independent hydrolysis of activated Ala-AMP. The other activity is designated 'posttransfer' editing and involves deacylation of mischarged Ala-tRNA(Pro). The misacylated Cys-tRNA(Pro) is not edited by ProRS. The sequence is that of Proline--tRNA ligase from Corynebacterium glutamicum (strain ATCC 13032 / DSM 20300 / JCM 1318 / BCRC 11384 / CCUG 27702 / LMG 3730 / NBRC 12168 / NCIMB 10025 / NRRL B-2784 / 534).